The following is a 111-amino-acid chain: UPF0122 protein LACR_1522 (111 aa).

The protein belongs to the UPF0122 family.

Might take part in the signal recognition particle (SRP) pathway. This is inferred from the conservation of its genetic proximity to ftsY/ffh. May be a regulatory protein. The polypeptide is UPF0122 protein LACR_1522 (Lactococcus lactis subsp. cremoris (strain SK11)).